We begin with the raw amino-acid sequence, 1275 residues long: Inner capsid protein lambda-1 (1275 aa).

Residues 1-12 are compositionally biased toward basic residues; it reads MKRIPRKTRGKS. Residues 1 to 147 are disordered; that stretch reads MKRIPRKTRG…NVDNEGGDNQ (147 aa). A compositionally biased stretch (basic and acidic residues) spans 18–35; the sequence is DSTERADDGSAQLRDKQS. Positions 55 to 66 are enriched in polar residues; the sequence is TRPSLQTVQKAT. Composition is skewed to basic and acidic residues over residues 80 to 98 and 105 to 117; these read AVDKKGNTKGDKTNEHVEA and ATKRQAKDTDKQK. Polar residues predominate over residues 118–139; sequence AQVTYNDTGINNANELSRSGNV. Residues 181–203 form a C2H2-type zinc finger; sequence YQCHVCSAVLFSPLDLDAHVASH.

Belongs to the turreted BTV-fold inner capsid family. As to quaternary structure, homodecamer; each decamer is made up of two conformers of VP2, called VP2A and VP2B. 12 homodecamers assemble to form an icosahedral capsid. Interacts with protein mu-NS; in viral inclusions. It depends on Mg(2+) as a cofactor. Mn(2+) serves as cofactor.

Its subcellular location is the virion. It catalyses the reaction ATP + H2O = ADP + phosphate + H(+). Inner capsid protein that self-assembles to form an icosahedral capsid with a T=2 symmetry, which consists of 120 copies of VP2, with channels at each of its five-fold vertices. This capsid constitutes the innermost concentric layer of the viral mature particle. In terms of biological role, displays NTPase, RNA 5'-triphosphatase (RTPase) and RNA helicase activities and probably participates in transcription of the viral genome. Helicase activity might be involved in unwinding or reannealing dsRNA during RNA synthesis. RTPase enzymatic activity represents the first step in RNA capping, which yields a 5'-diphosphorylated plus-strand RNA. The polypeptide is Inner capsid protein lambda-1 (Reovirus type 2 (strain D5/Jones) (T2J)).